A 250-amino-acid polypeptide reads, in one-letter code: MSVTMREMLEAGVHFGHQTRFWNPKMAPFIFGHRNKIHIINLEKSLPMFQDAQKFVKQLASNGGTILMVGTKRQAREMVAAEAQRAGVPFVDQRWLGGMLTNFKTVKTSIKRLKEMKAQQEAGLEAMSKKEQLMFVRELEKLEKDIGGIQDMNSLPDAIFVIDVGFHKIAVAEAKKLGIPLVGVVDSNHNPEGIDYVIPGNDDSAKAVQLYAQGIADAILEGRAAALTDVVKAASGESGDEFVEVEESAA.

The protein belongs to the universal ribosomal protein uS2 family.

This is Small ribosomal subunit protein uS2 from Delftia acidovorans (strain DSM 14801 / SPH-1).